Reading from the N-terminus, the 115-residue chain is MNLIMVISINIILSSILILVAFWLPQLNSYTEKANPYECGFDPMSSARLPFSMKFFLVAITFLLFDLEIALLLPIPWAIQTYNINTMLLAAFILVSILALGLAYEWKQKGLEWTE.

3 helical membrane passes run leucine 3–tryptophan 23, phenylalanine 55–isoleucine 75, and isoleucine 84–tyrosine 104.

It belongs to the complex I subunit 3 family. In terms of assembly, core subunit of respiratory chain NADH dehydrogenase (Complex I) which is composed of 45 different subunits. Interacts with TMEM186. Interacts with TMEM242.

It localises to the mitochondrion inner membrane. The enzyme catalyses a ubiquinone + NADH + 5 H(+)(in) = a ubiquinol + NAD(+) + 4 H(+)(out). Its function is as follows. Core subunit of the mitochondrial membrane respiratory chain NADH dehydrogenase (Complex I) which catalyzes electron transfer from NADH through the respiratory chain, using ubiquinone as an electron acceptor. Essential for the catalytic activity of complex I. The chain is NADH-ubiquinone oxidoreductase chain 3 from Scotinomys teguina (Alston's brown mouse).